The sequence spans 535 residues: Ribonuclease Y 2 (535 aa).

Residues 1–21 (MLITGLIIGCLLIGLVIGYVV) form a helical membrane-spanning segment. Residues 207–268 (LEHTVTVPNG…IRREVARVAL (62 aa)) enclose the KH domain. An HD domain is found at 334–427 (VLLHSIEVAQ…VAAADAISGA (94 aa)).

Belongs to the RNase Y family.

The protein localises to the cell membrane. Endoribonuclease that initiates mRNA decay. The sequence is that of Ribonuclease Y 2 from Levilactobacillus brevis (strain ATCC 367 / BCRC 12310 / CIP 105137 / JCM 1170 / LMG 11437 / NCIMB 947 / NCTC 947) (Lactobacillus brevis).